We begin with the raw amino-acid sequence, 203 residues long: CASP-like protein 5A2 (203 aa).

Residues 1–63 (MRASRPVVHP…KDPPGAPGTP (63 aa)) lie on the Cytoplasmic side of the membrane. The tract at residues 39–58 (AAHGGENAQPRGVRMKDPPG) is disordered. The helical transmembrane segment at 64 to 84 (GGLGLRLVQAFFAAAALAVMA) threads the bilayer. At 85–94 (STDDFPSVSA) the chain is on the extracellular side. A helical membrane pass occupies residues 95–115 (FCYLVAAAILQCLWSLSLAVV). At 116-139 (DIYALLVKRSLRNPQAVCIFTIGD) the chain is on the cytoplasmic side. Residues 140–160 (GITGTLTLGAACASAGITVLI) form a helical membrane-spanning segment. Residues 161–177 (GNDLNICANNHCASFET) are Extracellular-facing. The helical transmembrane segment at 178 to 198 (ATAMAFISWFALAPSCVLNFW) threads the bilayer. Topologically, residues 199 to 203 (SMASR) are cytoplasmic.

It belongs to the Casparian strip membrane proteins (CASP) family. In terms of assembly, homodimer and heterodimers.

Its subcellular location is the cell membrane. The chain is CASP-like protein 5A2 from Oryza sativa subsp. indica (Rice).